The primary structure comprises 1791 residues: Sodium channel protein type 11 subunit alpha (1791 aa).

The Cytoplasmic portion of the chain corresponds to 1-126 (MDDRCYPVIF…SIRSLAIRVS (126 aa)). An I repeat occupies 115–408 (FNSIRSLAIR…VTMAYEEQNK (294 aa)). The helical transmembrane segment at 127–148 (VHSLFSMFIIGTVIINCVFMAT) threads the bilayer. The Extracellular portion of the chain corresponds to 149–156 (GPAKNSNS). The chain crosses the membrane as a helical span at residues 157 to 180 (NNTDIAECVFTGIYIFEALIKILA). The Cytoplasmic portion of the chain corresponds to 181-192 (RGFILDEFSFLR). The chain crosses the membrane as a helical span at residues 193–212 (DPWNWLDSIVIGIAIVSYIP). At 213 to 219 (GITIKLL) the chain is on the extracellular side. A helical; Voltage-sensor membrane pass occupies residues 220 to 239 (PLRTFRVFRALKAISVVSRL). Over 240-255 (KVIVGALLRSVKKLVN) the chain is Cytoplasmic. A helical membrane pass occupies residues 256–269 (VIILTFFCLSIFAL). Topologically, residues 270 to 344 (VGQQLFMGSL…PDYNYTNFDN (75 aa)) are extracellular. Cysteines 283 and 322 form a disulfide. Asn-290 and Asn-338 each carry an N-linked (GlcNAc...) asparagine glycan. Residues 345–369 (FGWSFLAMFRLMTQDSWEKLYQQTL) constitute an intramembrane region (pore-forming). The Extracellular segment spans residues 370–376 (RTTGLYS). A helical transmembrane segment spans residues 377-402 (VFFFIVVIFLGSFYLINLTLAVVTMA). Topologically, residues 403-572 (YEEQNKNVAA…WLCVKKVLRT (170 aa)) are cytoplasmic. An II repeat occupies 559–833 (CCPQWLCVKK…EGEARKTKVQ (275 aa)). The helical transmembrane segment at 573–596 (VMTDPFTELAITICIIINTVFLAM) threads the bilayer. Topologically, residues 597 to 607 (EHHKMEASFEK) are extracellular. Residues 608–631 (MLNIGNLVFTSIFIAEMCLKIIAL) traverse the membrane as a helical segment. Residues 632–639 (DPYHYFRR) are Cytoplasmic-facing. The helical transmembrane segment at 640–659 (GWNIFDSIVALLSFADVMNC) threads the bilayer. The Extracellular portion of the chain corresponds to 660–667 (VLQKRSWP). A helical; Voltage-sensor transmembrane segment spans residues 668 to 687 (FLRSFRVLRVFKLAKSWPTL). Topologically, residues 688–702 (NTLIKIIGNSVGALG) are cytoplasmic. The helical transmembrane segment at 703–725 (SLTVVLVIVIFIFSVVGMQLFGR) threads the bilayer. Topologically, residues 726-753 (SFNSQKSPKLCNPTGPTVSCLRHWHMGD) are extracellular. The pore-forming intramembrane region spans 754–774 (FWHSFLVVFRILCGEWIENMW). The Extracellular segment spans residues 775–785 (ECMQEANASSS). Cys-776 and Cys-787 are oxidised to a cystine. N-linked (GlcNAc...) asparagine glycosylation occurs at Asn-781. A helical membrane pass occupies residues 786–811 (LCVIVFILITVIGKLVVLNLFIALLL). The Cytoplasmic segment spans residues 812-1051 (NSFSNEERNG…WWNLRKTCYQ (240 aa)). Residues 1044 to 1339 (NLRKTCYQIV…KKYYNAMKKL (296 aa)) form an III repeat. Residues 1052–1074 (IVKHSWFESFIIFVILLSSGALI) traverse the membrane as a helical segment. Residues 1075 to 1088 (FEDVHLENQPKIQE) lie on the Extracellular side of the membrane. The chain crosses the membrane as a helical span at residues 1089–1114 (LLNCTDIIFTHIFILEMVLKWVAFGF). The Cytoplasmic portion of the chain corresponds to 1115-1120 (GKYFTS). Residues 1121–1138 (AWCCLDFIIVIVSVTTLI) form a helical membrane-spanning segment. Position 1139 (Asn-1139) is a topological domain, extracellular. Residues 1140 to 1161 (LMELKSFRTLRALRPLRALSQF) form a helical; Voltage-sensor membrane-spanning segment. Residues 1162 to 1180 (EGMKVVVNALIGAIPAILN) are Cytoplasmic-facing. A helical membrane pass occupies residues 1181–1202 (VLLVCLIFWLVFCILGVYFFSG). Residues 1203 to 1243 (KFGKCINGTDSVINYTIITNKSQCESGNFSWINQKVNFDNV) are Extracellular-facing. N-linked (GlcNAc...) asparagine glycosylation is found at Asn-1209, Asn-1216, Asn-1222, and Asn-1230. Positions 1244–1265 (GNAYLALLQVATFKGWMDIIYA) form an intramembrane region, pore-forming. The Extracellular portion of the chain corresponds to 1266–1281 (AVDSTEKEQQPEFESN). A helical transmembrane segment spans residues 1282-1308 (SLGYIYFVVFIIFGSFFTLNLFIGVII). Residues 1309 to 1361 (DNFNQQQKKLGGQDIFMTEEQKKYYNAMKKLGSKKPQKPIPRPLNKCQGLVFD) lie on the Cytoplasmic side of the membrane. The stretch at 1348–1639 (IPRPLNKCQG…WEKFDPEATQ (292 aa)) is one IV repeat. A helical membrane pass occupies residues 1362–1385 (IVTSQIFDIIIISLIILNMISMMA). Residues 1386–1396 (ESYNQPKAMKS) lie on the Extracellular side of the membrane. A helical membrane pass occupies residues 1397 to 1420 (ILDHLNWVFVVIFTLECLIKIFAL). At 1421–1426 (RQYYFT) the chain is on the cytoplasmic side. Residues 1427-1450 (NGWNLFDCVVVLLSIVSTMISTLE) form a helical membrane-spanning segment. At 1451–1461 (NQEHIPFPPTL) the chain is on the extracellular side. A helical; Voltage-sensor membrane pass occupies residues 1462–1484 (FRIVRLARIGRILRLVRAARGIR). Topologically, residues 1485-1499 (TLLFALMMSLPSLFN) are cytoplasmic. Residues 1500 to 1522 (IGLLLFLIMFIYAILGMNWFSKV) traverse the membrane as a helical segment. Residues 1523-1536 (NPESGIDDIFNFKT) lie on the Extracellular side of the membrane. The pore-forming intramembrane region spans 1537 to 1559 (FASSMLCLFQISTSAGWDSLLSP). Over 1560-1579 (MLRSKESCNSSSENCHLPGI) the chain is Extracellular. Residue Asn-1568 is glycosylated (N-linked (GlcNAc...) asparagine). The helical transmembrane segment at 1580–1604 (ATSYFVSYIIISFLIVVNMYIAVIL) threads the bilayer. Topologically, residues 1605–1791 (ENFNTATEES…GVAKGKVHCD (187 aa)) are cytoplasmic.

This sequence belongs to the sodium channel (TC 1.A.1.10) family. Nav1.9/SCN11A subfamily. The voltage-resistant sodium channel consists of an ion conducting pore forming alpha-subunit regulated by one or more auxiliary subunits SCN1B, SCN2B and SCN3B. In terms of tissue distribution, expressed in the dorsal root ganglia and trigeminal ganglia, olfactory bulb, hippocampus, cerebellar cortex, spinal cord, spleen, small intestine and placenta.

It localises to the cell membrane. It catalyses the reaction Na(+)(in) = Na(+)(out). Activity is not sensitive to inhibition by tetrodotoxin. Its function is as follows. Sodium channel mediating the voltage-dependent sodium ion permeability of excitable membranes. Assuming opened or closed conformations in response to the voltage difference across the membrane, the protein forms a sodium-selective channel through which sodium ions may pass in accordance with their electrochemical gradient. Involved in membrane depolarization during action potential in nociceptors which function as key relay stations for the electrical transmission of pain signals from the periphery to the central nervous system. Also involved in rapid BDNF-evoked neuronal depolarization. The protein is Sodium channel protein type 11 subunit alpha of Homo sapiens (Human).